Here is a 174-residue protein sequence, read N- to C-terminus: Protein GrpE (174 aa).

The protein belongs to the GrpE family. Homodimer.

Its subcellular location is the cytoplasm. Its function is as follows. Participates actively in the response to hyperosmotic and heat shock by preventing the aggregation of stress-denatured proteins, in association with DnaK and GrpE. It is the nucleotide exchange factor for DnaK and may function as a thermosensor. Unfolded proteins bind initially to DnaJ; upon interaction with the DnaJ-bound protein, DnaK hydrolyzes its bound ATP, resulting in the formation of a stable complex. GrpE releases ADP from DnaK; ATP binding to DnaK triggers the release of the substrate protein, thus completing the reaction cycle. Several rounds of ATP-dependent interactions between DnaJ, DnaK and GrpE are required for fully efficient folding. This is Protein GrpE from Pseudothermotoga lettingae (strain ATCC BAA-301 / DSM 14385 / NBRC 107922 / TMO) (Thermotoga lettingae).